The primary structure comprises 229 residues: uncharacterized protein (229 aa).

Positions 61-229 (MQAEDKVSKP…TESEDKPKRG (169 aa)) are disordered. The segment covering 109–128 (QQEKQQPEKAVVEQQEKQQP) has biased composition (basic and acidic residues). Low complexity predominate over residues 166-194 (QPEQPERQQQAQPERQQQAQPERQQQAQP). Residues 195-204 (EEAEDAEQEP) are compositionally biased toward acidic residues. Basic and acidic residues predominate over residues 218-229 (TQTESEDKPKRG).

This is an uncharacterized protein from Frog virus 3 (isolate Goorha) (FV-3).